A 432-amino-acid polypeptide reads, in one-letter code: MIRVAVITLGCPKNQVESEYMLGILEKNHLEVVSDPRQAEVVIINTCSFITAAREEALDTILELARAANHPRLIVAGCLAQQYASELWQELPEAAAFIGPGATGRLPEIINRVLKGERVLDVPGPEMITGELPRLIEDGKPFAYLKIAEGCNNRCTYCTIPSIKGPYRSRPLEKVVAEAVSLAARGIKELVLVAQDTTAYGLDCYGEYRLPELLRRLARIEGIEWVRLLYAYPTRITPELIEVMATEPGVVPYLDLPLQHASEGVLRRMGRPGTGAAGLRAIESLRRAIPEITIRSTFIVGFPGEEEEDFQILLDFLTDARLDWVGAFKFSPEEGTIAASLPGQVPEEVKEERYQRLMLHQQSITRACNEGWLGREVQVLKEGPEVGRSMRQAPEVDGVVYVKGDPSPAGSMVTVKLTQLYNIYDFLGEIKL.

The MTTase N-terminal domain maps to 2–115; that stretch reads IRVAVITLGC…LPEIINRVLK (114 aa). C11, C47, C78, C151, C155, and C158 together coordinate [4Fe-4S] cluster. In terms of domain architecture, Radical SAM core spans 137-367; sequence EDGKPFAYLK…MLHQQSITRA (231 aa).

The protein belongs to the methylthiotransferase family. RimO subfamily. [4Fe-4S] cluster serves as cofactor.

The protein resides in the cytoplasm. The enzyme catalyses L-aspartate(89)-[ribosomal protein uS12]-hydrogen + (sulfur carrier)-SH + AH2 + 2 S-adenosyl-L-methionine = 3-methylsulfanyl-L-aspartate(89)-[ribosomal protein uS12]-hydrogen + (sulfur carrier)-H + 5'-deoxyadenosine + L-methionine + A + S-adenosyl-L-homocysteine + 2 H(+). Its function is as follows. Catalyzes the methylthiolation of an aspartic acid residue of ribosomal protein uS12. The sequence is that of Ribosomal protein uS12 methylthiotransferase RimO from Moorella thermoacetica (strain ATCC 39073 / JCM 9320).